The sequence spans 680 residues: Protein terminal ear1 homolog (680 aa).

Residues S223 to P295 enclose the RRM domain. Disordered stretches follow at residues R294–G415 and T593–D680. 2 stretches are compositionally biased toward low complexity: residues P328 to G340 and S379 to Q403. Residues K404–W413 show a composition bias toward gly residues. Composition is skewed to low complexity over residues S602–S621 and S634–A648. Basic and acidic residues predominate over residues H656 to D666.

In terms of tissue distribution, highly expressed in shoot apex and inflorescence apex, at intermediate levels in roots and at low levels in leaf blade and leaf sheath.

In terms of biological role, probable RNA-binding protein. Involved in the regular timing (plastochron) of lateral organs formation. May regulate the rate of leaf initiation and the duration of vegetative phase. Seems to be redundant to the function of PLASTOCHRON1, but to act in an independent pathway. In Oryza sativa subsp. indica (Rice), this protein is Protein terminal ear1 homolog (PLA2).